The primary structure comprises 362 residues: Putative RING-H2 finger protein ATL21B (362 aa).

The first 23 residues, 1–23 (MIISKQLFLLFFLLFFIFPLRHA), serve as a signal peptide directing secretion. The helical transmembrane segment at 234–254 (VVAVLICLSIIGAVILFVTCI) threads the bilayer. Residues 316–358 (CPICLSEYVSKETVRFIPECDHCFHAKCIDVWLKIHGSCPLCR) form an RING-type; atypical zinc finger.

It belongs to the RING-type zinc finger family. ATL subfamily.

It is found in the membrane. The enzyme catalyses S-ubiquitinyl-[E2 ubiquitin-conjugating enzyme]-L-cysteine + [acceptor protein]-L-lysine = [E2 ubiquitin-conjugating enzyme]-L-cysteine + N(6)-ubiquitinyl-[acceptor protein]-L-lysine.. The protein operates within protein modification; protein ubiquitination. The protein is Putative RING-H2 finger protein ATL21B (ATL21B) of Arabidopsis thaliana (Mouse-ear cress).